The chain runs to 255 residues: Hemin import ATP-binding protein HmuV (255 aa).

The 237-residue stretch at 2 to 238 (LRAHNLHIRR…ESLKAVFGLE (237 aa)) folds into the ABC transporter domain. 34 to 41 (GPNGAGKS) lines the ATP pocket.

It belongs to the ABC transporter superfamily. Heme (hemin) importer (TC 3.A.1.14.5) family. As to quaternary structure, the complex is composed of two ATP-binding proteins (HmuV), two transmembrane proteins (HmuU) and a solute-binding protein (HmuT).

It is found in the cell inner membrane. Its function is as follows. Part of the ABC transporter complex HmuTUV involved in hemin import. Responsible for energy coupling to the transport system. In Pseudomonas fluorescens (strain Pf0-1), this protein is Hemin import ATP-binding protein HmuV.